The primary structure comprises 358 residues: E3 ubiquitin-protein ligase RFI2 (358 aa).

The tract at residues 1–34 is disordered; sequence MAGAKDSGCDDDLRIAGGCDPGKRGNPEDSSSPV. Residues 38 to 83 form an RING-type; atypical zinc finger; the sequence is CSICLESVLDDGTRSKAKLQCGHQFHLDCIGSAFNMKGAMQCPNCR. Disordered regions lie at residues 174–201 and 248–313; these read GPAA…DHFH and SNQR…DQNV. The segment covering 187 to 201 has biased composition (basic and acidic residues); it reads TDDHPWNSHSNDHFH. Residues 248-266 are compositionally biased toward polar residues; sequence SNQRSSPAINSYQGSSTQM. A compositionally biased stretch (pro residues) spans 299-309; sequence LPPPPPPPPMP.

Its subcellular location is the nucleus. It catalyses the reaction S-ubiquitinyl-[E2 ubiquitin-conjugating enzyme]-L-cysteine + [acceptor protein]-L-lysine = [E2 ubiquitin-conjugating enzyme]-L-cysteine + N(6)-ubiquitinyl-[acceptor protein]-L-lysine.. It participates in protein modification; protein ubiquitination. Functionally, mediates phytochrome (phyA and phyB)-controlled seedling deetiolation responses such as hypocotyl elongation in response to red and far-red light. Required for light-induced expression of LHCB3 and CHALCONE SYNTHASE (CHS). Negatively regulates CONSTANS (CO) and FLOWERING LOCUS T (FT) expression and photoperiodic flowering. The chain is E3 ubiquitin-protein ligase RFI2 from Arabidopsis thaliana (Mouse-ear cress).